The following is a 293-amino-acid chain: Zinc finger protein 80 (293 aa).

2 consecutive C2H2-type zinc fingers follow at residues 69–91 (YKCKECGKVFNKNSLLVRHHQIH) and 97–119 (YECQECGKAFHEKVDFVRHMRIH). The segment at 125–147 (CKCVECGKVFNRRSHLLCYHQIH) adopts a C2H2-type 3; atypical zinc-finger fold. C2H2-type zinc fingers lie at residues 153–175 (YECSECGKTFSYHSVFIQHRMTH), 181–203 (FGCKECGKTFYYNSSLTRHMKIH), 209–231 (YKCGECGKTFTYHSVFFRHSMTH), and 237–259 (YECKECGKGFYYSYSLTRHTRSH).

The protein belongs to the krueppel C2H2-type zinc-finger protein family.

Its subcellular location is the nucleus. Functionally, may be involved in transcriptional regulation. The sequence is that of Zinc finger protein 80 (ZNF80) from Macaca mulatta (Rhesus macaque).